We begin with the raw amino-acid sequence, 272 residues long: Zinc finger protein 32 (272 aa).

Basic and acidic residues predominate over residues 50 to 65 (RREKLEQKSPESKALQ). Residues 50–69 (RREKLEQKSPESKALQEDSP) are disordered. 3 consecutive C2H2-type zinc fingers follow at residues 76–98 (YDCQ…ERIH), 104–126 (FECT…QRIH), and 132–154 (YQCK…ERLH). The Zn(2+) site is built by cysteine 78, cysteine 81, histidine 94, histidine 98, cysteine 106, cysteine 109, histidine 122, histidine 126, serine 140, glutamine 143, glycine 156, tyrosine 160, phenylalanine 197, lysine 200, leucine 213, alanine 217, cysteine 246, cysteine 249, histidine 262, and cysteine 266. 2 consecutive C2H2-type zinc fingers follow at residues 160 to 182 (YECA…RRVH) and 188 to 210 (YRCD…IRVH). The C2H2-type 6 zinc-finger motif lies at 216–238 (YACSHCRKSFHTRGNCLLHGKVH). A CCHC-type zinc finger spans residues 244 to 266 (YLCGQCGKSFTQRGSLAVHQRSC).

It belongs to the krueppel C2H2-type zinc-finger protein family.

It is found in the nucleus. May be involved in transcriptional regulation. This chain is Zinc finger protein 32 (Znf32), found in Mus musculus (Mouse).